A 99-amino-acid chain; its full sequence is Large ribosomal subunit protein bL28 (99 aa).

It belongs to the bacterial ribosomal protein bL28 family.

The sequence is that of Large ribosomal subunit protein bL28 from Rhodospirillum rubrum (strain ATCC 11170 / ATH 1.1.1 / DSM 467 / LMG 4362 / NCIMB 8255 / S1).